Consider the following 25-residue polypeptide: Alpha-lytic protease (25 aa).

The protein belongs to the peptidase S1 family.

The enzyme catalyses Preferential cleavage: Ala-|-Xaa, Val-|-Xaa in bacterial cell walls, elastin and other proteins.. The protein is Alpha-lytic protease of Achromobacter lyticus.